Consider the following 143-residue polypeptide: Large ribosomal subunit protein uL11 (143 aa).

Belongs to the universal ribosomal protein uL11 family. As to quaternary structure, part of the ribosomal stalk of the 50S ribosomal subunit. Interacts with L10 and the large rRNA to form the base of the stalk. L10 forms an elongated spine to which L12 dimers bind in a sequential fashion forming a multimeric L10(L12)X complex. One or more lysine residues are methylated.

Forms part of the ribosomal stalk which helps the ribosome interact with GTP-bound translation factors. The protein is Large ribosomal subunit protein uL11 of Borrelia garinii subsp. bavariensis (strain ATCC BAA-2496 / DSM 23469 / PBi) (Borreliella bavariensis).